The following is a 353-amino-acid chain: Photosystem II protein D1 (353 aa).

Thr2 carries the post-translational modification N-acetylthreonine. Position 2 is a phosphothreonine (Thr2). 3 helical membrane-spanning segments follow: residues 29–46, 118–133, and 142–156; these read YIGW…TATS, HFLL…EWEL, and WIAV…AATA. His118 contributes to the chlorophyll a binding site. Tyr126 lines the pheophytin a pocket. Asp170 and Glu189 together coordinate [CaMn4O5] cluster. Residues 197 to 218 traverse the membrane as a helical segment; the sequence is FHMLGVAGVFGGSLFSAMHGSL. Residue His198 participates in chlorophyll a binding. A quinone contacts are provided by residues His215 and 264 to 265; that span reads SF. His215 is a Fe cation binding site. His272 is a Fe cation binding site. Residues 274–288 traverse the membrane as a helical segment; it reads LLAAWPVVGIWFTAL. [CaMn4O5] cluster is bound by residues His332, Glu333, Asp342, and Ala344. Residues 345–353 constitute a propeptide that is removed on maturation; sequence AVEAPSTNG.

This sequence belongs to the reaction center PufL/M/PsbA/D family. As to quaternary structure, PSII is composed of 1 copy each of membrane proteins PsbA, PsbB, PsbC, PsbD, PsbE, PsbF, PsbH, PsbI, PsbJ, PsbK, PsbL, PsbM, PsbT, PsbX, PsbY, PsbZ, Psb30/Ycf12, at least 3 peripheral proteins of the oxygen-evolving complex and a large number of cofactors. It forms dimeric complexes. The D1/D2 heterodimer binds P680, chlorophylls that are the primary electron donor of PSII, and subsequent electron acceptors. It shares a non-heme iron and each subunit binds pheophytin, quinone, additional chlorophylls, carotenoids and lipids. D1 provides most of the ligands for the Mn4-Ca-O5 cluster of the oxygen-evolving complex (OEC). There is also a Cl(-1) ion associated with D1 and D2, which is required for oxygen evolution. The PSII complex binds additional chlorophylls, carotenoids and specific lipids. is required as a cofactor. Post-translationally, tyr-161 forms a radical intermediate that is referred to as redox-active TyrZ, YZ or Y-Z. In terms of processing, C-terminally processed by CTPA; processing is essential to allow assembly of the oxygen-evolving complex and thus photosynthetic growth.

The protein localises to the plastid. It is found in the chloroplast thylakoid membrane. The enzyme catalyses 2 a plastoquinone + 4 hnu + 2 H2O = 2 a plastoquinol + O2. Its function is as follows. Photosystem II (PSII) is a light-driven water:plastoquinone oxidoreductase that uses light energy to abstract electrons from H(2)O, generating O(2) and a proton gradient subsequently used for ATP formation. It consists of a core antenna complex that captures photons, and an electron transfer chain that converts photonic excitation into a charge separation. The D1/D2 (PsbA/PsbD) reaction center heterodimer binds P680, the primary electron donor of PSII as well as several subsequent electron acceptors. The sequence is that of Photosystem II protein D1 from Dioscorea elephantipes (Elephant's foot yam).